Consider the following 396-residue polypeptide: Fumarate--(S)-2,3-diaminopropanoate ligase (396 aa).

The catalysed reaction is (S)-2,3-diaminopropanoate + fumarate + ATP = N(3)-fumaroyl-(S)-2,3-diaminopropanoate + AMP + diphosphate. Its pathway is antibiotic biosynthesis. Involved in dapdiamide antibiotics biosynthesis. Ligates fumarate and 2,3-diaminopropionate (DAP) to form N-beta-fumaroyl-DAP. Can also form N-succinoyl-DAP from succinate and DAP, with lower efficiency. The polypeptide is Fumarate--(S)-2,3-diaminopropanoate ligase (Enterobacter agglomerans (Erwinia herbicola)).